The chain runs to 453 residues: Homogentisate 1,2-dioxygenase (453 aa).

Histidine 306 serves as the catalytic Proton acceptor. Residues histidine 349 and glutamate 355 each contribute to the Fe cation site. Homogentisate-binding residues include tyrosine 364 and histidine 385. Residue histidine 385 participates in Fe cation binding.

It belongs to the homogentisate dioxygenase family. As to quaternary structure, hexamer; dimer of trimers. Fe cation is required as a cofactor.

It carries out the reaction homogentisate + O2 = 4-maleylacetoacetate + H(+). It functions in the pathway amino-acid degradation; L-phenylalanine degradation; acetoacetate and fumarate from L-phenylalanine: step 4/6. In terms of biological role, involved in the catabolism of homogentisate (2,5-dihydroxyphenylacetate or 2,5-OH-PhAc), a central intermediate in the degradation of phenylalanine and tyrosine. Catalyzes the oxidative ring cleavage of the aromatic ring of homogentisate to yield maleylacetoacetate. This is Homogentisate 1,2-dioxygenase from Rhizobium etli (strain CIAT 652).